Consider the following 336-residue polypeptide: UPF0324 membrane protein spr0034 (336 aa).

The next 8 membrane-spanning stretches (helical) occupy residues 65–84 (LLQY…QVFA), 91–113 (PVIL…FFAL), 118–140 (ATLV…APVI), 153–175 (VIFF…LHLS), 211–233 (SATI…LSYW), 249–271 (VFPL…TSLG), 286–305 (FLIV…VAMV), and 312–334 (ILLG…TLIG).

It belongs to the UPF0324 family.

The protein localises to the cell membrane. This Streptococcus pneumoniae (strain ATCC BAA-255 / R6) protein is UPF0324 membrane protein spr0034.